The primary structure comprises 158 residues: Molybdopterin synthase catalytic subunit (158 aa).

Substrate-binding positions include 107 to 108 (HR), K123, and 130 to 132 (KKE).

It belongs to the MoaE family. MOCS2B subfamily. Heterotetramer; composed of 2 small (mocs2s) and 2 large (mocs2l) subunits.

It is found in the cytoplasm. It carries out the reaction 2 [molybdopterin-synthase sulfur-carrier protein]-C-terminal-Gly-aminoethanethioate + cyclic pyranopterin phosphate + H2O = molybdopterin + 2 [molybdopterin-synthase sulfur-carrier protein]-C-terminal Gly-Gly + 2 H(+). The protein operates within cofactor biosynthesis; molybdopterin biosynthesis. Catalytic subunit of the molybdopterin synthase complex, a complex that catalyzes the conversion of precursor Z into molybdopterin. Acts by mediating the incorporation of 2 sulfur atoms from thiocarboxylated mocs2s into precursor Z to generate a dithiolene group. The protein is Molybdopterin synthase catalytic subunit (mocs2l) of Dictyostelium discoideum (Social amoeba).